The chain runs to 178 residues: Large ribosomal subunit protein uL6 (178 aa).

The protein belongs to the universal ribosomal protein uL6 family. In terms of assembly, part of the 50S ribosomal subunit.

Functionally, this protein binds to the 23S rRNA, and is important in its secondary structure. It is located near the subunit interface in the base of the L7/L12 stalk, and near the tRNA binding site of the peptidyltransferase center. This is Large ribosomal subunit protein uL6 from Helicobacter pylori (strain P12).